The sequence spans 289 residues: 4-diphosphocytidyl-2-C-methyl-D-erythritol kinase (289 aa).

K15 is a catalytic residue. ATP is bound at residue 100 to 110 (PVSAGLAGGSA). The active site involves D140.

It belongs to the GHMP kinase family. IspE subfamily.

It catalyses the reaction 4-CDP-2-C-methyl-D-erythritol + ATP = 4-CDP-2-C-methyl-D-erythritol 2-phosphate + ADP + H(+). Its pathway is isoprenoid biosynthesis; isopentenyl diphosphate biosynthesis via DXP pathway; isopentenyl diphosphate from 1-deoxy-D-xylulose 5-phosphate: step 3/6. Functionally, catalyzes the phosphorylation of the position 2 hydroxy group of 4-diphosphocytidyl-2C-methyl-D-erythritol. This is 4-diphosphocytidyl-2-C-methyl-D-erythritol kinase from Anaplasma marginale (strain Florida).